We begin with the raw amino-acid sequence, 30 residues long: Neurotoxin II.22.5 (30 aa).

Residues 1–30 (KEGYIVNYHTGCKYTCAKLGDNDYCLRECK) enclose the LCN-type CS-alpha/beta domain.

The protein belongs to the long (4 C-C) scorpion toxin superfamily. Sodium channel inhibitor family. Beta subfamily. Expressed by the venom gland.

It localises to the secreted. Binds to sodium channels (Nav) and inhibits the inactivation of the activated channels, thereby blocking neuronal transmission. This Centruroides tecomanus (Scorpion) protein is Neurotoxin II.22.5.